Reading from the N-terminus, the 191-residue chain is Nascent polypeptide-associated complex subunit alpha (191 aa).

The NAC-A/B domain maps to 24–89 (SRPERKARKA…AKVEDPNSAA (66 aa)). A disordered region spans residues 126 to 149 (QDAPSADSSAPAPSGEATDASASG). A compositionally biased stretch (low complexity) spans 127–139 (DAPSADSSAPAPS). The UBA domain occupies 153-191 (VSDEEIQLIVAQTGVDEAKAREAYISEKGDLINAIMKLQ).

This sequence belongs to the NAC-alpha family. As to quaternary structure, part of the nascent polypeptide-associated complex (NAC), consisting of EGD2 and EGD1. NAC associates with ribosomes via EGD1.

The protein localises to the cytoplasm. Its subcellular location is the nucleus. Its function is as follows. Component of the nascent polypeptide-associated complex (NAC), a dynamic component of the ribosomal exit tunnel, protecting the emerging polypeptides from interaction with other cytoplasmic proteins to ensure appropriate nascent protein targeting. The NAC complex also promotes mitochondrial protein import by enhancing productive ribosome interactions with the outer mitochondrial membrane and blocks the inappropriate interaction of ribosomes translating non-secretory nascent polypeptides with translocation sites in the membrane of the endoplasmic reticulum. EGD2 may also be involved in transcription regulation. This chain is Nascent polypeptide-associated complex subunit alpha (EGD2), found in Cryptococcus neoformans var. neoformans serotype D (strain B-3501A) (Filobasidiella neoformans).